Here is a 148-residue protein sequence, read N- to C-terminus: Lysozyme C (148 aa).

A signal peptide spans 1–18; sequence MKALTILGLVLLSVTVQG. A C-type lysozyme domain is found at 19–148; the sequence is KIFERCELAR…VSQYVKGCGV (130 aa). 4 disulfide bridges follow: Cys-24–Cys-146, Cys-48–Cys-134, Cys-83–Cys-99, and Cys-95–Cys-113. Residues Glu-53 and Asp-71 contribute to the active site.

It belongs to the glycosyl hydrolase 22 family. As to quaternary structure, monomer.

Its subcellular location is the secreted. It catalyses the reaction Hydrolysis of (1-&gt;4)-beta-linkages between N-acetylmuramic acid and N-acetyl-D-glucosamine residues in a peptidoglycan and between N-acetyl-D-glucosamine residues in chitodextrins.. In terms of biological role, lysozymes have primarily a bacteriolytic function; those in tissues and body fluids are associated with the monocyte-macrophage system and enhance the activity of immunoagents. Also plays a role in digestion in this species. The chain is Lysozyme C (LYZ) from Semnopithecus entellus (Northern plains gray langur).